A 412-amino-acid chain; its full sequence is Divalent metal cation transporter MntH (412 aa).

Topologically, residues 1–19 are cytoplasmic; it reads MTNYRVESSSGRAARKMRL. The helical transmembrane segment at 20-39 threads the bilayer; sequence ALMGPAFIAAIGYIDPGNFA. The Periplasmic segment spans residues 40-51; sequence TNIQAGASFGYQ. The helical transmembrane segment at 52–71 threads the bilayer; it reads LLWVVVWANLMAMLIQILSA. Residues 72-95 are Cytoplasmic-facing; the sequence is KLGIATGKNLAEQIRDHYPRPVVW. The chain crosses the membrane as a helical span at residues 96–118; sequence FYWVQAEIIAMATDLAEFIGAAI. The Periplasmic portion of the chain corresponds to 119 to 125; the sequence is GFKLILG. The helical transmembrane segment at 126 to 145 threads the bilayer; sequence VSLLQGAVLTGIATFLILML. The Cytoplasmic segment spans residues 146–155; it reads QRRGQKPLEK. A helical transmembrane segment spans residues 156 to 175; that stretch reads VIGGLLLFVAAAYIVELIFS. Topologically, residues 176-196 are periplasmic; sequence QPNLAQLGKGMVIPSLPTSEA. A helical membrane pass occupies residues 197-220; the sequence is VFLAAGVLGATIMPHVIYLHSSLT. Over 221-238 the chain is Cytoplasmic; that stretch reads QHLHGGSRQQRYSATKWD. A helical transmembrane segment spans residues 239 to 258; it reads VAIAMTIAGFVNLAMMATAA. The Periplasmic segment spans residues 259-276; that stretch reads AAFHFSGHTGVADLDEAY. The chain crosses the membrane as a helical span at residues 277–297; the sequence is LTLQPLLSHAAATVFGLSLVA. The Cytoplasmic segment spans residues 298–327; that stretch reads AGLSSTVVGTLAGQVVMQGFIRFHIPLWVR. A helical membrane pass occupies residues 328 to 344; the sequence is RTVTMLPSFIVILMGLD. The Periplasmic segment spans residues 345–350; the sequence is PTRILV. A helical membrane pass occupies residues 351–370; the sequence is MSQVLLSFGIALALVPLLIF. The Cytoplasmic portion of the chain corresponds to 371 to 387; the sequence is TSDSKLMGDLVNSKRVK. A helical membrane pass occupies residues 388-406; the sequence is QTGWVIVVLVVALNIWLLV. At 407 to 412 the chain is on the periplasmic side; that stretch reads GTALGL.

It belongs to the NRAMP family.

The protein localises to the cell inner membrane. In terms of biological role, h(+)-stimulated, divalent metal cation uptake system. In Escherichia fergusonii (strain ATCC 35469 / DSM 13698 / CCUG 18766 / IAM 14443 / JCM 21226 / LMG 7866 / NBRC 102419 / NCTC 12128 / CDC 0568-73), this protein is Divalent metal cation transporter MntH.